The primary structure comprises 291 residues: ATP synthase gamma chain (291 aa).

The protein belongs to the ATPase gamma chain family. As to quaternary structure, F-type ATPases have 2 components, CF(1) - the catalytic core - and CF(0) - the membrane proton channel. CF(1) has five subunits: alpha(3), beta(3), gamma(1), delta(1), epsilon(1). CF(0) has three main subunits: a, b and c.

The protein localises to the cell membrane. Functionally, produces ATP from ADP in the presence of a proton gradient across the membrane. The gamma chain is believed to be important in regulating ATPase activity and the flow of protons through the CF(0) complex. This chain is ATP synthase gamma chain, found in Streptococcus pyogenes serotype M1.